The primary structure comprises 883 residues: Coatomer subunit gamma (883 aa).

The tract at residues 1 to 25 is disordered; that stretch reads MNYFSLTSHKKHRGHPSAGPSNAYQ. 6 HEAT repeats span residues 69 to 106, 292 to 329, 331 to 364, 365 to 401, 404 to 439, and 476 to 513; these read REAT…IAED, RMLS…THPA, VTTC…GAES, SVER…KYPR, TVLM…ENAD, and ATPS…SCPA.

The protein belongs to the COPG family. Oligomeric complex that consists of at least the alpha, beta, beta', gamma, delta, epsilon and zeta subunits. Expressed in ovary, testis, testis tip, young spermatocytes, germ cells and follicle cells. Up-regulated expression within centrally to posteriorly located germarial cysts and in migrating follicle cells. Widespread expression in imaginal disks including eye-antennal disk, wing disk, third leg and haltere disk.

The protein localises to the cytoplasm. It is found in the golgi apparatus membrane. It localises to the cytoplasmic vesicle. The protein resides in the COPI-coated vesicle membrane. Its subcellular location is the endoplasmic reticulum. Its function is as follows. The coatomer is a cytosolic protein complex that binds to dilysine motifs and reversibly associates with Golgi non-clathrin-coated vesicles, which further mediate biosynthetic protein transport from the ER, via the Golgi up to the trans Golgi network. Coatomer complex is required for budding from Golgi membranes, and is essential for the retrograde Golgi-to-ER transport of dilysine-tagged proteins. Required for limiting lipid storage in lipid droplets. Involved in the expansion of luminal extracellular matrices and apical membrane during tubulogenesis. Required in the tracheal epithelium for luminal protein secretion and diametric tube growth. In salivary glands, required for deposition of O-glycans and luminal extracellular matrix assembly. Required for epidermal morphogenesis and cuticle development. This is Coatomer subunit gamma from Drosophila melanogaster (Fruit fly).